Here is a 476-residue protein sequence, read N- to C-terminus: Zinc metalloproteinase/disintegrin (476 aa).

An N-terminal signal peptide occupies residues 1-20 (MIQVLLVTICLAAFPYQGSS). A propeptide spanning residues 21–192 (IILESGNVND…ASQSNLTPEQ (172 aa)) is cleaved from the precursor. Gln193 is subject to Pyrrolidone carboxylic acid. The Peptidase M12B domain occupies 198 to 393 (RYIELAVVAD…HNPQCILNKP (196 aa)). 2 residues coordinate Ca(2+): Glu201 and Asp285. 3 disulfides stabilise this stretch: Cys309–Cys388, Cys348–Cys372, and Cys350–Cys355. Position 334 (His334) interacts with Zn(2+). Glu335 is an active-site residue. Zn(2+) is bound by residues His338 and His344. 2 residues coordinate Ca(2+): Cys388 and Asn391. Residues 394-403 (LTTVSGNELL) constitute a propeptide that is removed on maturation. A Disintegrin domain is found at 395-476 (TTVSGNELLE…ADCPRNRFHA (82 aa)). Cystine bridges form between Cys409/Cys424, Cys411/Cys419, Cys418/Cys441, Cys432/Cys438, Cys437/Cys462, and Cys450/Cys469. The Cell attachment site motif lies at 454–456 (RGD).

The protein belongs to the venom metalloproteinase (M12B) family. P-II subfamily. P-IIa sub-subfamily. As to quaternary structure, monomer (metalloprotease). Requires Zn(2+) as cofactor. Post-translationally, the N-terminus is blocked. Not glycosylated. Expressed by the venom gland.

Its subcellular location is the secreted. Its activity is regulated as follows. Inhibited by EDTA, and 1,10-phenanthroline, but not by PMSF. Functionally, non-hemorrhagic proteinase that activates prothrombin (F2) calcium-independently. Activates factor X (F10) and hydrolyzes the Aalpha-chain and more slowly the Bbeta-chain of fibrin and fibrinogen without affecting the gamma chain. It induces neither detachment nor apoptosis of human endothelial cells and is also not able to trigger an endothelial pro-inflammatory cell response. Nitric oxide and prostacyclin levels released by endothelial cells are significantly increased after treatment with insularinase A. Inhibits ADP-induced platelet aggregation (IC(50)=0.8 uM for native protein). Interestingly, inhibits the adhesion of HUVECs to immobilized fibrinogen at very low concentrations (IC(50)=36 nM). The protein is Zinc metalloproteinase/disintegrin of Bothrops insularis (Golden lancehead).